The primary structure comprises 846 residues: Translation initiation factor IF-2 (846 aa).

Residues 94 to 263 (QRSPEEIQAE…HGFQNPTGPV (170 aa)) form a disordered region. Residues 96 to 135 (SPEEIQAEQKRELEERRAAENAARDKVEAEVRQRNEEQAR) show a composition bias toward basic and acidic residues. Composition is skewed to low complexity over residues 136–148 (RQAA…APAP) and 158–176 (AAPV…ASED). 2 stretches are compositionally biased toward basic and acidic residues: residues 177 to 206 (AAAR…RGEA) and 230 to 239 (TTDEESDGAR). A compositionally biased stretch (basic residues) spans 240–253 (RGRGGKSKLKKRNQ). The 168-residue stretch at 346–513 (SRAPVVTVMG…AVLLQAEILE (168 aa)) folds into the tr-type G domain. The segment at 355 to 362 (GHVDHGKT) is G1. 355–362 (GHVDHGKT) contacts GTP. The G2 stretch occupies residues 380 to 384 (GITQH). Positions 401-404 (DTPG) are G3. GTP contacts are provided by residues 401 to 405 (DTPGH) and 455 to 458 (NKID). The interval 455-458 (NKID) is G4. The interval 491–493 (SAK) is G5.

Belongs to the TRAFAC class translation factor GTPase superfamily. Classic translation factor GTPase family. IF-2 subfamily.

The protein resides in the cytoplasm. Functionally, one of the essential components for the initiation of protein synthesis. Protects formylmethionyl-tRNA from spontaneous hydrolysis and promotes its binding to the 30S ribosomal subunits. Also involved in the hydrolysis of GTP during the formation of the 70S ribosomal complex. This Pseudomonas putida (strain ATCC 700007 / DSM 6899 / JCM 31910 / BCRC 17059 / LMG 24140 / F1) protein is Translation initiation factor IF-2.